The following is a 243-amino-acid chain: uncharacterized protein (243 aa).

Residues 207-224 (KKTSISGYKTLDVKRKFV) carry the Bipartite nuclear localization signal motif.

This is an uncharacterized protein from Acheta domesticus (House cricket).